Here is a 149-residue protein sequence, read N- to C-terminus: 3-dehydroquinate dehydratase (149 aa).

Catalysis depends on Tyr26, which acts as the Proton acceptor. The substrate site is built by Asn77, His83, and Asp90. The Proton donor role is filled by His103. Residues 104–105 (LS) and Arg114 contribute to the substrate site.

Belongs to the type-II 3-dehydroquinase family. Homododecamer.

The catalysed reaction is 3-dehydroquinate = 3-dehydroshikimate + H2O. The protein operates within metabolic intermediate biosynthesis; chorismate biosynthesis; chorismate from D-erythrose 4-phosphate and phosphoenolpyruvate: step 3/7. Catalyzes a trans-dehydration via an enolate intermediate. The sequence is that of 3-dehydroquinate dehydratase from Haemophilus influenzae (strain PittEE).